The chain runs to 418 residues: Gamma-glutamyl phosphate reductase (418 aa).

This sequence belongs to the gamma-glutamyl phosphate reductase family.

The protein resides in the cytoplasm. It catalyses the reaction L-glutamate 5-semialdehyde + phosphate + NADP(+) = L-glutamyl 5-phosphate + NADPH + H(+). The protein operates within amino-acid biosynthesis; L-proline biosynthesis; L-glutamate 5-semialdehyde from L-glutamate: step 2/2. Its function is as follows. Catalyzes the NADPH-dependent reduction of L-glutamate 5-phosphate into L-glutamate 5-semialdehyde and phosphate. The product spontaneously undergoes cyclization to form 1-pyrroline-5-carboxylate. The chain is Gamma-glutamyl phosphate reductase from Colwellia psychrerythraea (strain 34H / ATCC BAA-681) (Vibrio psychroerythus).